The sequence spans 116 residues: Outer membrane protein assembly factor BamE (116 aa).

Residues 1–22 form the signal peptide; it reads MITMRCKMLTAAAVMLAMLTAG. C23 carries the N-palmitoyl cysteine lipid modification. C23 is lipidated: S-diacylglycerol cysteine.

Belongs to the BamE family. In terms of assembly, part of the Bam complex, which is composed of the outer membrane protein BamA, and four lipoproteins BamB, BamC, BamD and BamE.

It localises to the cell outer membrane. In terms of biological role, part of the outer membrane protein assembly complex, which is involved in assembly and insertion of beta-barrel proteins into the outer membrane. This chain is Outer membrane protein assembly factor BamE, found in Yersinia pestis.